A 61-amino-acid polypeptide reads, in one-letter code: MFGIGMPELIVILVIVLVVFGAGRLPEIGGALGKSIRNFKKASDGKDEIEIKPEKKDDPSK.

A helical membrane pass occupies residues 1–21; it reads MFGIGMPELIVILVIVLVVFG.

This sequence belongs to the TatA/E family. As to quaternary structure, the Tat system comprises two distinct complexes: a TatABC complex, containing multiple copies of TatA, TatB and TatC subunits, and a separate TatA complex, containing only TatA subunits. Substrates initially bind to the TatABC complex, which probably triggers association of the separate TatA complex to form the active translocon.

It is found in the cell inner membrane. Part of the twin-arginine translocation (Tat) system that transports large folded proteins containing a characteristic twin-arginine motif in their signal peptide across membranes. TatA could form the protein-conducting channel of the Tat system. The chain is Sec-independent protein translocase protein TatA from Geobacter metallireducens (strain ATCC 53774 / DSM 7210 / GS-15).